A 161-amino-acid polypeptide reads, in one-letter code: Large ribosomal subunit protein uL15 (161 aa).

Positions 1-47 are disordered; that stretch reads MKLHELHDNPGANRKKKRVARGPGSGKGKTAGRGIKGQTSRSGVALN. Over residues 23 to 35 the composition is skewed to gly residues; it reads PGSGKGKTAGRGI.

Belongs to the universal ribosomal protein uL15 family. In terms of assembly, part of the 50S ribosomal subunit.

In terms of biological role, binds to the 23S rRNA. The sequence is that of Large ribosomal subunit protein uL15 from Paracoccus denitrificans (strain Pd 1222).